A 389-amino-acid chain; its full sequence is Tubulin-like protein CetZ3 (389 aa).

Residues 10–14 (QAGGK), 110–112 (GTG), glutamate 142, asparagine 169, and asparagine 187 contribute to the GTP site.

Belongs to the CetZ family.

The protein localises to the cytoplasm. Involved in cell shape control. The polypeptide is Tubulin-like protein CetZ3 (Haloferax volcanii (strain ATCC 29605 / DSM 3757 / JCM 8879 / NBRC 14742 / NCIMB 2012 / VKM B-1768 / DS2) (Halobacterium volcanii)).